The following is a 382-amino-acid chain: Pentatricopeptide repeat-containing protein 2, mitochondrial (382 aa).

One copy of the PPR repeat lies at Thr159–Lys193.

It belongs to the PTCD2 family.

It is found in the mitochondrion. May be involved in mitochondrial RNA maturation and mitochondrial respiratory chain function. The sequence is that of Pentatricopeptide repeat-containing protein 2, mitochondrial (ptcd2) from Xenopus laevis (African clawed frog).